Here is a 117-residue protein sequence, read N- to C-terminus: Non-specific lipid-transfer protein 3 (117 aa).

A signal peptide spans 1-25 (MAGLVKLSCLVLACMIVAGPIATNA). 4 cysteine pairs are disulfide-bonded: Cys-29-Cys-76, Cys-39-Cys-53, Cys-54-Cys-99, and Cys-74-Cys-113.

Belongs to the plant LTP family.

Functionally, plant non-specific lipid-transfer proteins transfer phospholipids as well as galactolipids across membranes. May play a role in wax or cutin deposition in the cell walls of expanding epidermal cells and certain secretory tissues. In Brassica napus (Rape), this protein is Non-specific lipid-transfer protein 3 (LTP3).